We begin with the raw amino-acid sequence, 1127 residues long: MPKRTDIKSVMVIGSGPIVIGQAAEFDYSGTQACRVLREEGIRVILVNSNPATIMTDPEMADATYIEPIATPILEQIIAKERPDALLPTLGGQTALNAAMALGEAGVLKKYNVELIGASLEAIDRGEDRELFKKVVDEAGAESARSDIAHSIEEVDKIAEKFGYPLVVRPSFTMGGLGSGIAHNEEELHRIAGAGIHYSPTDEVLIEEGIEGWKEFELELMRDRNDNVVVVCPIENVDPVGVHTGDSITVAPCFTLTDREYQKLRDIGIAIIRGVGVDTGGCNIQFAVHPDTGRIIVIEMNPRVSRSSALASKATGFPIAKIATKLALGYTLDEIRNDITQSTPASFEPTIDYVVTKVPRFAFEKFPGADPTLTTSMKSVGEAMALAGNFQESLGKAMRSIDKRHMGFNWDGEKPSAEEVAELLEAIHTPTEHRYLQLMRAIWGGATLEQVFAATKIDPWFLKQIFLINETAMTVREAETLTPRLLKKAKLAGLSDVQVAHLRGLGDEGENTIRELRWTYGLRPVYKTVDTCAAEFDAATPYYYSCYADETELRPREREAVIILGSGPNRIGQGIEFDYTCVHAVQELGKDYDTIMVNCNPETVSTDYDMSDRLYFEPLTFEDVLEIYEAEKKMGPVKGVIVQLGGQTPLSLAARLKAAGVPILGTTPESIDLAENRELFGEVLKKAEMNAPRYGTALSLEEAKEAAHRIGYPVLVRPSYVLGGRGMEIVYDDKQLNKYVDRALAEAKADTVVSGRLPSPLLIDKFLQDAIEIDVDALFDGEELYIGGIMEHVEEAGVHSGDAACTLPPSTLSDDQIRRLREGTYAIAKGCHVQGLINVQYAFMANTLYVIEANPRASRTVPFASKATGVALAKAAARIMAGETIADQRANGLLLPKGDGGDIHPGQQVAVKESVLPFKRFRTPVGKTVDILLGPEMRSTGEVMGFDRDFPHAFAKSQLAAYDGGLPTHGNVFISVNDTDKRQLPLIAVRLEELGFKLWATEGTASVLRRYGIESNIVDKISTRVDTDPEAPVEVHHAAGSVGKNVVQLIEEGKIDMILNTPNSRGSRSDGYSIRAAAIAADLPQFTTITEFQAALLAIEAVKHNDYQIMSIQEHSKQLFELERREF.

The tract at residues 1 to 402 is carboxyphosphate synthetic domain; the sequence is MPKRTDIKSV…SLGKAMRSID (402 aa). Positions 129, 169, 175, 176, 208, 210, 215, 241, 242, 243, 285, and 299 each coordinate ATP. The ATP-grasp 1 domain occupies 133–328; the sequence is KKVVDEAGAE…IAKIATKLAL (196 aa). Residues Gln285, Glu299, and Asn301 each contribute to the Mg(2+) site. Mn(2+) contacts are provided by Gln285, Glu299, and Asn301. Positions 403–551 are oligomerization domain; sequence KRHMGFNWDG…YYYSCYADET (149 aa). The segment at 552 to 962 is carbamoyl phosphate synthetic domain; sequence ELRPREREAV…AFAKSQLAAY (411 aa). The ATP-grasp 2 domain maps to 681-881; the sequence is GEVLKKAEMN…LAKAAARIMA (201 aa). ATP-binding residues include Arg717, Lys765, Leu767, Glu772, Gly797, Val798, His799, Ser800, Gln840, and Glu852. Mg(2+) is bound by residues Gln840, Glu852, and Asn854. 3 residues coordinate Mn(2+): Gln840, Glu852, and Asn854. The tract at residues 963–1127 is allosteric domain; the sequence is DGGLPTHGNV…QLFELERREF (165 aa). One can recognise an MGS-like domain in the interval 964–1127; it reads GGLPTHGNVF…QLFELERREF (164 aa).

This sequence belongs to the CarB family. As to quaternary structure, composed of two chains; the small (or glutamine) chain promotes the hydrolysis of glutamine to ammonia, which is used by the large (or ammonia) chain to synthesize carbamoyl phosphate. Tetramer of heterodimers (alpha,beta)4. Mg(2+) is required as a cofactor. It depends on Mn(2+) as a cofactor.

It catalyses the reaction hydrogencarbonate + L-glutamine + 2 ATP + H2O = carbamoyl phosphate + L-glutamate + 2 ADP + phosphate + 2 H(+). It carries out the reaction hydrogencarbonate + NH4(+) + 2 ATP = carbamoyl phosphate + 2 ADP + phosphate + 2 H(+). It functions in the pathway amino-acid biosynthesis; L-arginine biosynthesis; carbamoyl phosphate from bicarbonate: step 1/1. Its pathway is pyrimidine metabolism; UMP biosynthesis via de novo pathway; (S)-dihydroorotate from bicarbonate: step 1/3. In terms of biological role, large subunit of the glutamine-dependent carbamoyl phosphate synthetase (CPSase). CPSase catalyzes the formation of carbamoyl phosphate from the ammonia moiety of glutamine, carbonate, and phosphate donated by ATP, constituting the first step of 2 biosynthetic pathways, one leading to arginine and/or urea and the other to pyrimidine nucleotides. The large subunit (synthetase) binds the substrates ammonia (free or transferred from glutamine from the small subunit), hydrogencarbonate and ATP and carries out an ATP-coupled ligase reaction, activating hydrogencarbonate by forming carboxy phosphate which reacts with ammonia to form carbamoyl phosphate. This chain is Carbamoyl phosphate synthase large chain, found in Bifidobacterium longum (strain DJO10A).